A 133-amino-acid chain; its full sequence is Putative biopolymer transport protein ExbD-like 1 (133 aa).

Over methionine 1 to asparagine 15 the chain is Cytoplasmic. Residues isoleucine 16–valine 32 traverse the membrane as a helical segment. The Periplasmic portion of the chain corresponds to threonine 33 to proline 133.

This sequence belongs to the ExbD/TolR family.

The protein localises to the cell inner membrane. This chain is Putative biopolymer transport protein ExbD-like 1, found in Helicobacter pylori (strain ATCC 700392 / 26695) (Campylobacter pylori).